The sequence spans 72 residues: Translation initiation factor IF-1 (72 aa).

Positions 1–72 constitute an S1-like domain; sequence MSKEEVLEFS…TKGRITYRYK (72 aa).

It belongs to the IF-1 family. In terms of assembly, component of the 30S ribosomal translation pre-initiation complex which assembles on the 30S ribosome in the order IF-2 and IF-3, IF-1 and N-formylmethionyl-tRNA(fMet); mRNA recruitment can occur at any time during PIC assembly.

Its subcellular location is the cytoplasm. Functionally, one of the essential components for the initiation of protein synthesis. Stabilizes the binding of IF-2 and IF-3 on the 30S subunit to which N-formylmethionyl-tRNA(fMet) subsequently binds. Helps modulate mRNA selection, yielding the 30S pre-initiation complex (PIC). Upon addition of the 50S ribosomal subunit IF-1, IF-2 and IF-3 are released leaving the mature 70S translation initiation complex. The sequence is that of Translation initiation factor IF-1 from Bartonella bacilliformis (strain ATCC 35685 / KC583 / Herrer 020/F12,63).